We begin with the raw amino-acid sequence, 1447 residues long: MAHSKTRTNDGKITYPPGVKEISDKISKEEMVRRLKMVVKTFMDMDQDSEEEKELYLNLALHLASDFFLKHPDKDVRLLVACCLADIFRIYAPEAPYTSPDKLKDIFMFITRQLKGLEDTKSPQFNRYFYLLENIAWVKSYNICFELEDSNEIFTQLYRTLFSVINNGHNQKVHMHMVDLMSSIICEGDTVSQELLDTVLVNLVPAHKNLNKQAYDLAKALLKRTAQAIEPYITNFFNQVLMLGKTSISDLSEHVFDLILELYNIDSHLLLSVLPQLEFKLKSNDNEERLQVVKLLAKMFGAKDSELASQNKPLWQCYLGRFNDIHVPIRLECVKFASHCLMNHPDLAKDLTEYLKVRSHDPEEAIRHDVIVSIVTAAKKDILLVNDHLLNFVRERTLDKRWRVRKEAMMGLAQIYKKYALQSAAGKDAAKQICWVKDKLLHIYYQNSIDDRLLVERIFAQYMVPHNLETTERMKCLYYLYATLDLNAVKALNEMWKCQNLLRHQVKDLLDLIKQPKTDASVKAIFSKVMVITRNLPDPGKAQDFMKKFTQVLEDDEKIRKQLEALVSPTCSCKQAEGCVREITKKLGNPKQPTNPFLEMIKFLLERIAPVHIDTESISALIKQVNKSIDGTADDEDEGVPTDQAIRAGLELLKVLSFTHPISFHSAETFESLLACLKMDDEKVAEAALQIFKNTGSKIEEDFPHIRSALLPVLHHKSKKGPPRQAKYAIHCIHAIFSSKETQFAQIFEPLHKSLDPSNLEHLITPLVTIGHIALLAPDQFAAPLKSLVATFIVKDLLMNDRLPGKKTTKLWVPDEEVSPETMVKIQAIKMMVRWLLGMKNNHSKSGTSTLRLLTTILHSDGDLTEQGKISKPDMSRLRLAAGSAIVKLAQEPCYHEIITLEQYQLCALAINDECYQVRQVFAQKLHKGLSRLRLPLEYMAICALCAKDPVKERRAHARQCLVKNITVRREYLKQHAAVSEKLLSLLPEYVVPYTIHLLAHDPDYVKVQDIEQLKDVKECLWFVLEILMAKNENNSHAFIRKMVENIKQTKDAQGPDDTKMNEKLYTVCDVAMNIIMSKSTTYSLESPKDPVLPARFFTQPDKNFSNTKNYLPPEMKSFFTPGKPKTANVLGAVNKPLSSAGKQSQTKSSRMETVSNASSSSNPSSPGRIKGRLDSTEMDHSENEDYTMSSPLPGKKSDKREDSDLVRSELEKPRSRKKASVTDPEEKLGMDDLSKLVQEQKPKGSQRGRKRGHAASESEEQQWPEEKRHKEELLGNEDEQNSPPKKGKRGRPPKPLGGTSKEEPVVKTSKKGNKKKPAPPVVDEDEEEERQMGNTEQKSKSKQQRTSKRAQQRAESPETSAVESTQSTPQKGRGRPSKTPSPSQPKKNIRVGRSKQVATKENDSSEEMDVLQASSPVSDDTTQEGAEEEDISAGNVRRRSSKRERR.

The stretch at 383-419 is one HEAT repeat; the sequence is LLVNDHLLNFVRERTLDKRWRVRKEAMMGLAQIYKKY. Lysine 1136 is subject to N6-acetyllysine. Over residues 1137-1155 the composition is skewed to polar residues; that stretch reads PLSSAGKQSQTKSSRMETV. The segment at 1137–1447 is disordered; that stretch reads PLSSAGKQSQ…RRRSSKRERR (311 aa). 6 positions are modified to phosphoserine: serine 1140, serine 1162, serine 1166, serine 1176, serine 1182, and serine 1191. Positions 1156–1167 are enriched in low complexity; that stretch reads SNASSSSNPSSP. A compositionally biased stretch (basic and acidic residues) spans 1172–1184; that stretch reads GRLDSTEMDHSEN. Over residues 1196–1214 the composition is skewed to basic and acidic residues; the sequence is KKSDKREDSDLVRSELEKP. A Phosphoserine modification is found at serine 1221. The segment covering 1225-1243 has biased composition (basic and acidic residues); sequence PEEKLGMDDLSKLVQEQKP. Positions 1245-1254 are enriched in basic residues; that stretch reads GSQRGRKRGH. Residues 1247–1259 constitute a DNA-binding region (a.T hook 1); the sequence is QRGRKRGHAASES. 2 positions are modified to phosphoserine: serine 1257 and serine 1259. The segment covering 1265 to 1274 has biased composition (basic and acidic residues); that stretch reads PEEKRHKEEL. Serine 1283 carries the post-translational modification Phosphoserine. Residues 1287–1299 constitute a DNA-binding region (a.T hook 2); it reads KGKRGRPPKPLGG. Basic residues-rich tracts occupy residues 1309-1318 and 1341-1352; these read TSKKGNKKKP and KSKQQRTSKRAQ. Phosphoserine is present on residues serine 1357 and serine 1365. Polar residues predominate over residues 1358-1371; that stretch reads PETSAVESTQSTPQ. Residue threonine 1366 is modified to Phosphothreonine. Phosphoserine is present on serine 1368. 2 positions are modified to phosphothreonine: threonine 1369 and threonine 1380. The segment at residues 1371-1383 is a DNA-binding region (a.T hook 3); that stretch reads QKGRGRPSKTPSP. Over residues 1378-1387 the composition is skewed to low complexity; that stretch reads SKTPSPSQPK. A phosphoserine mark is found at serine 1382, serine 1416, and serine 1419. A compositionally biased stretch (acidic residues) spans 1422-1432; sequence TTQEGAEEEDI. Basic residues predominate over residues 1437–1447; that stretch reads VRRRSSKRERR.

Belongs to the PDS5 family. As to quaternary structure, interacts with the cohesin complex. Interacts with RAD21; the interaction is direct. Interacts with WAPL (via FGF motifs) or CDCA5 (via the FGF motif); the interaction is direct, cohesin-dependent and competitive. Highly expressed in intact prostate with levels decreasing after castration. Expressed exclusively in prostate cells inhibited from proliferating by long-term androgen exposure.

Its subcellular location is the nucleus. Functionally, regulator of sister chromatid cohesion in mitosis which may stabilize cohesin complex association with chromatin. May couple sister chromatid cohesion during mitosis to DNA replication. Cohesion ensures that chromosome partitioning is accurate in both meiotic and mitotic cells and plays an important role in DNA repair. Plays a role in androgen-induced proliferative arrest in prostate cells. In Rattus norvegicus (Rat), this protein is Sister chromatid cohesion protein PDS5 homolog B (Pds5b).